A 1722-amino-acid chain; its full sequence is Signal-induced proliferation-associated 1-like protein 2 (1722 aa).

Disordered stretches follow at residues 1-29 and 44-72; these read MSDP…RTMQ and SMGP…TPAV. The segment covering 57–66 has biased composition (gly residues); it reads EGGGGGGGPA. Phosphoserine occurs at positions 149, 380, and 384. The disordered stretch occupies residues 362-405; the sequence is ASAASQTPVPVGPAGGCESPLGSKEDLNSKENPDADEGDGKSND. Residues 384 to 403 are compositionally biased toward basic and acidic residues; the sequence is SKEDLNSKENPDADEGDGKS. Residues 596 to 813 form the Rap-GAP domain; it reads LLKLDEQGLS…RTRQEYLKDL (218 aa). A PDZ domain is found at 951 to 1027; it reads EMTLRRNGLG…VKVVIIQPHE (77 aa). A Phosphoserine modification is found at Ser-1030. Disordered regions lie at residues 1068 to 1246 and 1331 to 1360; these read HRVP…FGSG and GSMG…SKST. Composition is skewed to low complexity over residues 1091-1103 and 1120-1131; these read LQCQ…AQAA and SSPSNQSSSSDP. Over residues 1195-1218 the composition is skewed to basic and acidic residues; it reads YKERVLQKDGSCKESPNKLSHIGD. Residues 1220-1237 show a composition bias toward low complexity; that stretch reads SCSSHSSSNTLSSNTSSN. Ser-1245 carries the post-translational modification Phosphoserine. Residues 1331–1355 are compositionally biased toward low complexity; sequence GSMGDLSEVSSHSSGSQHSGSPSAH. Residues Ser-1461, Ser-1472, Ser-1478, Ser-1488, Ser-1549, Ser-1552, and Ser-1591 each carry the phosphoserine modification. Residues 1652 to 1712 are a coiled coil; the sequence is STLTGKVNQL…ATAQLRKFTE (61 aa).

The polypeptide is Signal-induced proliferation-associated 1-like protein 2 (Sipa1l2) (Mus musculus (Mouse)).